The chain runs to 337 residues: Pyridoxal 5'-phosphate synthase subunit PdxS (337 aa).

Asp-65 contacts D-ribose 5-phosphate. The Schiff-base intermediate with D-ribose 5-phosphate role is filled by Lys-122. Gly-194 is a D-ribose 5-phosphate binding site. D-glyceraldehyde 3-phosphate is bound at residue Lys-206. Residues Gly-255 and 276 to 277 contribute to the D-ribose 5-phosphate site; that span reads GS.

The protein belongs to the PdxS/SNZ family. As to quaternary structure, in the presence of PdxT, forms a dodecamer of heterodimers.

It carries out the reaction aldehydo-D-ribose 5-phosphate + D-glyceraldehyde 3-phosphate + L-glutamine = pyridoxal 5'-phosphate + L-glutamate + phosphate + 3 H2O + H(+). Its pathway is cofactor biosynthesis; pyridoxal 5'-phosphate biosynthesis. Catalyzes the formation of pyridoxal 5'-phosphate from ribose 5-phosphate (RBP), glyceraldehyde 3-phosphate (G3P) and ammonia. The ammonia is provided by the PdxT subunit. Can also use ribulose 5-phosphate and dihydroxyacetone phosphate as substrates, resulting from enzyme-catalyzed isomerization of RBP and G3P, respectively. The polypeptide is Pyridoxal 5'-phosphate synthase subunit PdxS (Metallosphaera sedula (strain ATCC 51363 / DSM 5348 / JCM 9185 / NBRC 15509 / TH2)).